The primary structure comprises 216 residues: Ribosomal RNA large subunit methyltransferase E (216 aa).

Gly67, Trp69, Asp87, Asp103, and Asp128 together coordinate S-adenosyl-L-methionine. Lys168 serves as the catalytic Proton acceptor.

The protein belongs to the class I-like SAM-binding methyltransferase superfamily. RNA methyltransferase RlmE family.

The protein resides in the cytoplasm. It catalyses the reaction uridine(2552) in 23S rRNA + S-adenosyl-L-methionine = 2'-O-methyluridine(2552) in 23S rRNA + S-adenosyl-L-homocysteine + H(+). Specifically methylates the uridine in position 2552 of 23S rRNA at the 2'-O position of the ribose in the fully assembled 50S ribosomal subunit. In Acinetobacter baylyi (strain ATCC 33305 / BD413 / ADP1), this protein is Ribosomal RNA large subunit methyltransferase E.